The primary structure comprises 402 residues: Homoserine O-acetyltransferase (402 aa).

The AB hydrolase-1 domain maps to 38–359 (NAVLVCHALT…HGHDAFLVEP (322 aa)). The active-site Nucleophile is S146. R217 lines the substrate pocket. Residues D319 and H352 contribute to the active site. Residue D353 coordinates substrate.

It belongs to the AB hydrolase superfamily. MetX family. Homodimer.

It is found in the cytoplasm. It catalyses the reaction L-homoserine + acetyl-CoA = O-acetyl-L-homoserine + CoA. The protein operates within amino-acid biosynthesis; L-methionine biosynthesis via de novo pathway; O-acetyl-L-homoserine from L-homoserine: step 1/1. Functionally, transfers an acetyl group from acetyl-CoA to L-homoserine, forming acetyl-L-homoserine. The chain is Homoserine O-acetyltransferase from Haloarcula marismortui (strain ATCC 43049 / DSM 3752 / JCM 8966 / VKM B-1809) (Halobacterium marismortui).